Here is a 1744-residue protein sequence, read N- to C-terminus: Complement C4-A (1744 aa).

The first 19 residues, 1–19, serve as a signal peptide directing secretion; that stretch reads MRLLWGLIWASSFFTLSLQ. Cysteine 68 and cysteine 97 are oxidised to a cystine. A glycan (N-linked (GlcNAc...) asparagine) is linked at asparagine 226. Cysteines 635 and 669 form a disulfide. Residues 676–679 constitute a propeptide that is removed on maturation; it reads RKKR. 3 disulfides stabilise this stretch: cysteine 702–cysteine 728, cysteine 703–cysteine 735, and cysteine 716–cysteine 736. Positions 702 to 736 constitute an Anaphylatoxin-like domain; the sequence is CCQDGVTRLPMMRSCEQRAARVQQPDCREPFLSCC. Asparagine 862 carries N-linked (GlcNAc...) asparagine glycosylation. Position 918 is a phosphoserine; by FAM20C (serine 918). Positions 1010–1013 form a cross-link, isoglutamyl cysteine thioester (Cys-Gln); that stretch reads CGEQ. Residue threonine 1244 is glycosylated (O-linked (GalNAc...) threonine). N-linked (GlcNAc...) (complex) asparagine glycosylation is present at asparagine 1328. Asparagine 1391 carries an N-linked (GlcNAc...) asparagine glycan. Sulfotyrosine is present on residues tyrosine 1417, tyrosine 1420, and tyrosine 1422. Positions 1447–1453 are excised as a propeptide; that stretch reads RRNRRRR. 5 disulfide bridges follow: cysteine 1471/cysteine 1535, cysteine 1583/cysteine 1588, cysteine 1595/cysteine 1673, cysteine 1618/cysteine 1742, and cysteine 1718/cysteine 1727. An NTR domain is found at 1595–1742; that stretch reads CPRQRRALER…FLQEYGTQGC (148 aa).

Complement circulates in blood as a disulfide-linked trimer of an alpha, beta and gamma chain. In terms of assembly, complement C4b is composed of complement C4b-A, complement C4 beta and complement C4 gamma chains that are associated via disulfide bonds. Non-enzymatic component of the C3 convertase, also named C4bC2b, composed of the serine protease complement C2b (C2), as well as complement C4b. Non-enzymatic component of the C5 convertase, also named C4bC2bC3b, composed of the serine protease complement C2b (C2), complement C3b, as well as complement C4b. Post-translationally, prior to secretion, the single-chain precursor is enzymatically cleaved by plasminogen (PLG) to yield non-identical chains alpha, beta and gamma. During activation of the complement systems, the alpha chain is cleaved into C4a and C4b by different proteases depending on the complement pathway: C4b stays linked to the beta and gamma chains, while C4a is released in the plasma. The alpha chain is cleaved by C1S to generate C4a and C4b following activation by the classical complement system. The alpha chain is cleaved to generate C4a and C4b by MASP2 following activation by the lectin complement system. The alpha chain is cleaved by GZMK to generate C4a and C4b following activation by the GZMK complement system. Further degradation of C4b by C1 into the inactive fragments C4c and C4d blocks the generation of C3 convertase. The proteolytic cleavages often are incomplete so that many structural forms can be found in plasma. Upon activation, the internal thioester bond reacts with carbohydrate antigens on the target surface to form amide or ester bonds, leading to covalent association with the surface of pathogens. In terms of processing, ser-1236 of complement C4b interacts with complement C3b via a thioester linkage. Post-translationally, N- and O-glycosylated. O-glycosylated with a core 1 or possibly core 8 glycan. Complement component C4 is expressed at highest levels in the liver, at moderate levels in the adrenal cortex, adrenal medulla, thyroid gland, and the kidney, and at lowest levels in the heart, ovary, small intestine, thymus, pancreas and spleen. The extra-hepatic sites of expression may be important for the local protection and inflammatory response.

It is found in the secreted. Its subcellular location is the synapse. The protein localises to the cell projection. The protein resides in the axon. It localises to the dendrite. It is found in the cell surface. With respect to regulation, specifically inhibited by nanobody hC4Nb8, inhibiting the classical complement pathway. Specifically inhibited by NbB5, NbE11 and NbH9 nanobodies, and to a lesser extent by NbH11 and NbE3 nanobodies. Functionally, precursor of non-enzymatic components of the classical, lectin and GZMK complement pathways, which consist in a cascade of proteins that leads to phagocytosis and breakdown of pathogens and signaling that strengthens the adaptive immune system. In terms of biological role, non-enzymatic component of C3 and C5 convertases. Generated following cleavage by complement proteases (C1S, MASP2 or GZMK, depending on the complement pathway), it covalently attaches to the surface of pathogens, where it acts as an opsonin that marks the surface of antigens for removal. It then recruits the serine protease complement C2b to form the C3 and C5 convertases, which cleave and activate C3 and C5, respectively, the next components of the complement pathways. Complement C4b-A isotype is responsible for effective binding to form amide bonds with immune aggregates or protein antigens, while complement C4b-B isotype catalyzes the transacylation of the thioester carbonyl group to form ester bonds with carbohydrate antigens. Its function is as follows. Putative humoral mediator released following cleavage by complement proteases (C1S, MASP2 or GZMK, depending on the complement pathway). While it is strongly similar to anaphylatoxins, its role is unclear. Was reported to act as a mediator of local inflammatory process; however these effects were probably due to contamination with C3a and/C5a anaphylatoxins in biological assays. The polypeptide is Complement C4-A (Homo sapiens (Human)).